The chain runs to 144 residues: Cytochrome c-type biogenesis protein CcmE (144 aa).

The Cytoplasmic portion of the chain corresponds to 1–7 (MKPRHKR). A helical; Signal-anchor for type II membrane protein membrane pass occupies residues 8 to 28 (ALMIVAALAVIGIAALLILNA). The Extracellular portion of the chain corresponds to 29-144 (LNSNIALYVT…EQAQKNGSAK (116 aa)). Residues His121 and Tyr125 each coordinate heme.

This sequence belongs to the CcmE/CycJ family.

The protein localises to the cell membrane. Its function is as follows. Heme chaperone required for the biogenesis of c-type cytochromes. Transiently binds heme delivered by CcmC and transfers the heme to apo-cytochromes in a process facilitated by CcmF and CcmH. The sequence is that of Cytochrome c-type biogenesis protein CcmE from Polynucleobacter asymbioticus (strain DSM 18221 / CIP 109841 / QLW-P1DMWA-1) (Polynucleobacter necessarius subsp. asymbioticus).